A 372-amino-acid chain; its full sequence is sn-glycerol-3-phosphate import ATP-binding protein UgpC (372 aa).

Positions 2–233 constitute an ABC transporter domain; the sequence is LDIQQLVKTY…PASTFVASFI (232 aa). 35–42 is an ATP binding site; it reads GPSGCGKS.

This sequence belongs to the ABC transporter superfamily. sn-glycerol-3-phosphate importer (TC 3.A.1.1.3) family. As to quaternary structure, the complex is composed of two ATP-binding proteins (UgpC), two transmembrane proteins (UgpA and UgpE) and a solute-binding protein (UgpB).

The protein resides in the cell inner membrane. The catalysed reaction is sn-glycerol 3-phosphate(out) + ATP + H2O = sn-glycerol 3-phosphate(in) + ADP + phosphate + H(+). Functionally, part of the ABC transporter complex UgpBAEC involved in sn-glycerol-3-phosphate (G3P) import. Responsible for energy coupling to the transport system. This chain is sn-glycerol-3-phosphate import ATP-binding protein UgpC, found in Vibrio vulnificus (strain CMCP6).